The sequence spans 96 residues: uncharacterized protein (96 aa).

This is an uncharacterized protein from Enterobacteria phage T4 (Bacteriophage T4).